A 1581-amino-acid polypeptide reads, in one-letter code: Pentafunctional AROM polypeptide (1581 aa).

The tract at residues 1 to 384 is 3-dehydroquinate synthase; the sequence is MPEPTKISIL…YEPKASVVPN (384 aa). Residues 44–46, 81–84, 114–116, and Asp119 contribute to the NAD(+) site; these read DTN, EVSK, and GGV. Position 130 (Arg130) interacts with 7-phospho-2-dehydro-3-deoxy-D-arabino-heptonate. Residue 139–140 coordinates NAD(+); sequence TT. Residues Asp146 and Lys152 each contribute to the 7-phospho-2-dehydro-3-deoxy-D-arabino-heptonate site. Lys161 lines the NAD(+) pocket. Asn162 contacts 7-phospho-2-dehydro-3-deoxy-D-arabino-heptonate. NAD(+) contacts are provided by residues 179-182 and Asn190; that span reads FLET. Position 194 (Glu194) interacts with Zn(2+). 7-phospho-2-dehydro-3-deoxy-D-arabino-heptonate is bound by residues 194 to 197 and Lys250; that span reads EVIK. Glu260 acts as the Proton acceptor; for 3-dehydroquinate synthase activity in catalysis. 7-phospho-2-dehydro-3-deoxy-D-arabino-heptonate-binding positions include 264 to 268 and His271; that span reads RNLLN. Zn(2+) is bound at residue His271. His275 functions as the Proton acceptor; for 3-dehydroquinate synthase activity in the catalytic mechanism. The 7-phospho-2-dehydro-3-deoxy-D-arabino-heptonate site is built by His287 and Lys356. Zn(2+) is bound at residue His287. Residues 397–842 are EPSP synthase; it reads VHPGVPKESN…WDTLRQLFSV (446 aa). Residue Cys824 is the For EPSP synthase activity of the active site. The segment at 864 to 1056 is shikimate kinase; the sequence is SASVFIIGMR…KQKKHSFFVS (193 aa). 871-878 lines the ATP pocket; sequence GMRGAGKT. The segment at 1057 to 1277 is 3-dehydroquinase; it reads LTLPDLRSAS…AAPGQLSATE (221 aa). His1180 acts as the Proton acceptor; for 3-dehydroquinate dehydratase activity in catalysis. Lys1208 functions as the Schiff-base intermediate with substrate; for 3-dehydroquinate dehydratase activity in the catalytic mechanism. The segment at 1290 to 1581 is shikimate dehydrogenase; it reads KKRFAIFGNP…ARTAVLGDSA (292 aa).

It in the N-terminal section; belongs to the sugar phosphate cyclases superfamily. Dehydroquinate synthase family. This sequence in the 2nd section; belongs to the EPSP synthase family. The protein in the 3rd section; belongs to the shikimate kinase family. In the 4th section; belongs to the type-I 3-dehydroquinase family. It in the C-terminal section; belongs to the shikimate dehydrogenase family. Homodimer. Zn(2+) is required as a cofactor.

The protein localises to the cytoplasm. The enzyme catalyses 7-phospho-2-dehydro-3-deoxy-D-arabino-heptonate = 3-dehydroquinate + phosphate. It carries out the reaction 3-dehydroquinate = 3-dehydroshikimate + H2O. The catalysed reaction is shikimate + NADP(+) = 3-dehydroshikimate + NADPH + H(+). It catalyses the reaction shikimate + ATP = 3-phosphoshikimate + ADP + H(+). The enzyme catalyses 3-phosphoshikimate + phosphoenolpyruvate = 5-O-(1-carboxyvinyl)-3-phosphoshikimate + phosphate. It participates in metabolic intermediate biosynthesis; chorismate biosynthesis; chorismate from D-erythrose 4-phosphate and phosphoenolpyruvate: step 2/7. Its pathway is metabolic intermediate biosynthesis; chorismate biosynthesis; chorismate from D-erythrose 4-phosphate and phosphoenolpyruvate: step 3/7. The protein operates within metabolic intermediate biosynthesis; chorismate biosynthesis; chorismate from D-erythrose 4-phosphate and phosphoenolpyruvate: step 4/7. It functions in the pathway metabolic intermediate biosynthesis; chorismate biosynthesis; chorismate from D-erythrose 4-phosphate and phosphoenolpyruvate: step 5/7. It participates in metabolic intermediate biosynthesis; chorismate biosynthesis; chorismate from D-erythrose 4-phosphate and phosphoenolpyruvate: step 6/7. In terms of biological role, the AROM polypeptide catalyzes 5 consecutive enzymatic reactions in prechorismate polyaromatic amino acid biosynthesis. The sequence is that of Pentafunctional AROM polypeptide from Aspergillus terreus (strain NIH 2624 / FGSC A1156).